A 55-amino-acid chain; its full sequence is Large ribosomal subunit protein bL33 (55 aa).

The protein belongs to the bacterial ribosomal protein bL33 family.

In Caulobacter vibrioides (strain ATCC 19089 / CIP 103742 / CB 15) (Caulobacter crescentus), this protein is Large ribosomal subunit protein bL33.